The primary structure comprises 470 residues: UDP-N-acetylmuramoylalanine--D-glutamate ligase (470 aa).

ATP is bound at residue 121–127 (GTNGKST).

The protein belongs to the MurCDEF family.

The protein resides in the cytoplasm. The catalysed reaction is UDP-N-acetyl-alpha-D-muramoyl-L-alanine + D-glutamate + ATP = UDP-N-acetyl-alpha-D-muramoyl-L-alanyl-D-glutamate + ADP + phosphate + H(+). It functions in the pathway cell wall biogenesis; peptidoglycan biosynthesis. Functionally, cell wall formation. Catalyzes the addition of glutamate to the nucleotide precursor UDP-N-acetylmuramoyl-L-alanine (UMA). In Rhizobium johnstonii (strain DSM 114642 / LMG 32736 / 3841) (Rhizobium leguminosarum bv. viciae), this protein is UDP-N-acetylmuramoylalanine--D-glutamate ligase.